The primary structure comprises 37 residues: Large ribosomal subunit protein bL36c (37 aa).

Belongs to the bacterial ribosomal protein bL36 family.

It localises to the plastid. It is found in the chloroplast. The polypeptide is Large ribosomal subunit protein bL36c (rpl36) (Cyanidium caldarium (Red alga)).